We begin with the raw amino-acid sequence, 84 residues long: Exodeoxyribonuclease 7 small subunit (84 aa).

Belongs to the XseB family. In terms of assembly, heterooligomer composed of large and small subunits.

The protein resides in the cytoplasm. It catalyses the reaction Exonucleolytic cleavage in either 5'- to 3'- or 3'- to 5'-direction to yield nucleoside 5'-phosphates.. Functionally, bidirectionally degrades single-stranded DNA into large acid-insoluble oligonucleotides, which are then degraded further into small acid-soluble oligonucleotides. In Janthinobacterium sp. (strain Marseille) (Minibacterium massiliensis), this protein is Exodeoxyribonuclease 7 small subunit.